Reading from the N-terminus, the 138-residue chain is Phospholipase A2 homolog mojave toxin acidic chain (138 aa).

The N-terminal stretch at methionine 1–tyrosine 40 is a signal peptide. Intrachain disulfides connect cysteine 42-cysteine 131, cysteine 44-cysteine 60, cysteine 59-cysteine 111, cysteine 65-cysteine 138, cysteine 66-cysteine 104, cysteine 73-cysteine 97, and cysteine 91-cysteine 102. Positions threonine 81–arginine 83 are excised as a propeptide. Residue glutamine 84 is modified to Pyrrolidone carboxylic acid. Positions aspartate 120–phenylalanine 126 are excised as a propeptide.

It belongs to the phospholipase A2 family. Group II subfamily. D49 sub-subfamily. As to quaternary structure, heterodimer of an acidic and a basic chain. The acidic subunit is non-toxic, without enzymatic activity and comprises 3 peptides that are cross-linked by 5 disulfide bridges. The basic subunit is toxic, has phospholipase A2 activity and is composed of a single chain. Requires Ca(2+) as cofactor. As to expression, expressed by the venom gland.

It localises to the secreted. Functionally, snake venom phospholipase A2 (PLA2) that inhibits neuromuscular transmission by blocking acetylcholine release from the nerve termini. The chain is Phospholipase A2 homolog mojave toxin acidic chain from Crotalus scutulatus scutulatus (Mojave rattlesnake).